A 1095-amino-acid polypeptide reads, in one-letter code: Inactive phospholipase C-like protein 1 (1095 aa).

Residues 1-11 (MAEGAAGREDP) show a composition bias toward basic and acidic residues. Residues 1 to 61 (MAEGAAGRED…PGAAGTPADS (61 aa)) are disordered. Phosphoserine occurs at positions 47 and 77. The tract at residues 83–222 (SNQKCGGRKK…IWVSGLRYLV (140 aa)) is interaction with PPP1C. Thr-93 bears the Phosphothreonine; by PKA mark. Residue Ser-95 is modified to Phosphoserine. A PH domain is found at 113–223 (SFMQAGCELK…WVSGLRYLVS (111 aa)). Positions 398–542 (QDMTQPLSHY…LKRMIIVKGK (145 aa)) constitute a PI-PLC X-box domain. Residues 543–567 (KLPSDPDVLEGEVTDEDEEAEMSRR) form an interaction with GABA A beta subunit region. Residue Thr-556 is modified to Phosphothreonine. A Phosphoserine modification is found at Ser-569. The PI-PLC Y-box domain occupies 585 to 701 (LSDLVSICKS…GYVLRPSIMR (117 aa)). The C2 domain maps to 701–830 (RDEVSYFSAN…PGYRHVPLRS (130 aa)). Coiled-coil stretches lie at residues 894-914 (LREA…IKEL) and 1034-1059 (LKGQ…QLAC). Residues 1066-1095 (KAPSSSAEAKSKRSLEAIEEKESSEENGKL) are disordered. Basic and acidic residues predominate over residues 1074–1095 (AKSKRSLEAIEEKESSEENGKL). At Ser-1079 the chain carries Phosphoserine.

In terms of assembly, interacts with PPP2CA. Interacts with Ins(1,4,5)P3, Ins(1,4,5,6)P4, GABARAP, GABA receptor beta subunits, GABA receptor gamma-2 subunits and PPP1C. May form a ternary complex with GABA receptor beta subunit and GABARAP. The formation of a ternary complex with GABA receptor beta subunit and GABARAP could be the key step for facilitating the association of GABARAP with the GABA receptor gamma-2 subunit and to allow it to be transported at the right destination. In terms of processing, phosphorylated by the catalytic subunit of PKA. Phosphorylation of Thr-93 resulted in dissociation of PPP1C from PRIP1. As to expression, expressed in a variety of fetal and adult organs including brain, lung and kidney. Its expression was greatly reduced in small and non-small cell lung carcinoma. Isoform 1 is predominantly expressed in brain.

Its subcellular location is the cytoplasm. Functionally, involved in an inositol phospholipid-based intracellular signaling cascade. Shows no PLC activity to phosphatidylinositol 4,5-bisphosphate and phosphatidylinositol. Component in the phospho-dependent endocytosis process of GABA A receptor. Regulates the turnover of receptors and thus contributes to the maintenance of GABA-mediated synaptic inhibition. Its aberrant expression could contribute to the genesis and progression of lung carcinoma. Acts as an inhibitor of PPP1C. The polypeptide is Inactive phospholipase C-like protein 1 (PLCL1) (Homo sapiens (Human)).